The sequence spans 267 residues: Interleukin-1 beta (267 aa).

A propeptide spanning residues 1–115 (MAPVPELTSE…DTWDDGFVCD (115 aa)) is cleaved from the precursor.

The protein belongs to the IL-1 family. As to quaternary structure, monomer. In its precursor form, weakly interacts with full-length MEFV; the mature cytokine does not interact at all. Interacts with integrins ITGAV:ITGBV and ITGA5:ITGB1; integrin-binding is required for IL1B signaling. Interacts with cargo receptor TMED10; the interaction is direct and is required for the secretion of IL1B mature form. Interacts with HSP90AB1; the interaction facilitates cargo translocation into the ERGIC. Interacts with HSP90B1; the interaction facilitates cargo translocation into the ERGIC.

It is found in the cytoplasm. The protein resides in the cytosol. The protein localises to the secreted. Its subcellular location is the lysosome. It localises to the extracellular exosome. In terms of biological role, potent pro-inflammatory cytokine. Initially discovered as the major endogenous pyrogen, induces prostaglandin synthesis, neutrophil influx and activation, T-cell activation and cytokine production, B-cell activation and antibody production, and fibroblast proliferation and collagen production. Promotes Th17 differentiation of T-cells. Synergizes with IL12/interleukin-12 to induce IFNG synthesis from T-helper 1 (Th1) cells. Plays a role in angiogenesis by inducing VEGF production synergistically with TNF and IL6. Involved in transduction of inflammation downstream of pyroptosis: its mature form is specifically released in the extracellular milieu by passing through the gasdermin-D (GSDMD) pore. This chain is Interleukin-1 beta (IL1B), found in Felis catus (Cat).